Here is a 536-residue protein sequence, read N- to C-terminus: Thiamine transport system permease protein ThiP (536 aa).

12 consecutive transmembrane segments (helical) span residues 16-36 (GLCA…ALWL), 58-78 (FSFW…VFLA), 95-115 (LCAM…LSVY), 134-154 (FSPY…LPMA), 199-219 (VAAL…SLGG), 240-260 (PARA…LVLL), 291-311 (DALL…AVVV), 334-354 (SLRI…MLLW), 373-393 (LSGM…FFLL), 404-424 (ADGI…LKVL), 463-483 (AQAL…VALF), and 506-526 (DGAV…TLIE). Residues 56–261 (VRFSFWQAFL…VCCLALVLLS (206 aa)) form the ABC transmembrane type-1 1 domain. One can recognise an ABC transmembrane type-1 2 domain in the interval 331 to 525 (VWTSLRIALA…LLCFTLFTLI (195 aa)).

Belongs to the binding-protein-dependent transport system permease family. As to quaternary structure, the complex is composed of two ATP-binding proteins (ThiQ), two transmembrane proteins (ThiP) and a solute-binding protein (ThiB).

The protein localises to the cell inner membrane. In terms of biological role, part of the ABC transporter complex ThiBPQ involved in thiamine import. Probably responsible for the translocation of the substrate across the membrane. Is also involved in thiamine pyrophosphate transport. This Salmonella typhimurium (strain LT2 / SGSC1412 / ATCC 700720) protein is Thiamine transport system permease protein ThiP.